The primary structure comprises 749 residues: uncharacterized protein (749 aa).

The Helicase ATP-binding domain occupies 63 to 243 (FQYVQKGESI…QLTGKPMRLV (181 aa)). 76–83 (TPTASGKT) provides a ligand contact to ATP. The DEVH box motif lies at 185-188 (DELH). The region spanning 276–430 (EVNELAKEFL…SARINPENLI (155 aa)) is the Helicase C-terminal domain.

This sequence belongs to the helicase family.

This is an uncharacterized protein from Bacillus subtilis (strain 168).